The sequence spans 158 residues: Transcription antitermination protein NusB (158 aa).

Over residues 1 to 12 the composition is skewed to basic and acidic residues; the sequence is MKRVEKRAEKQG. The tract at residues 1–20 is disordered; it reads MKRVEKRAEKQGRGTARKSR.

Belongs to the NusB family.

Involved in transcription antitermination. Required for transcription of ribosomal RNA (rRNA) genes. Binds specifically to the boxA antiterminator sequence of the ribosomal RNA (rrn) operons. The polypeptide is Transcription antitermination protein NusB (Nitrosospira multiformis (strain ATCC 25196 / NCIMB 11849 / C 71)).